The sequence spans 469 residues: Protein translocase subunit SecY (469 aa).

Topologically, residues 1-20 (MSFIDSLATLGQYLPAVTKP) are cytoplasmic. The chain crosses the membrane as a helical span at residues 21–47 (KEKPSLGQKLVWSLVAVIIYLIMASTP). Residues 48-59 (LYGITSASFFKN) are Extracellular-facing. Residues 60-67 (LILEQIIF) constitute an intramembrane region (helical). Residues 60–88 (LILEQIIFASTTGTLAQLGIGPIITAGLI) traverse the membrane as a discontinuously helical segment. The stretch at 68–79 (ASTTGTLAQLGI) is an intramembrane region. The helical intramembrane region spans 80 to 88 (GPIITAGLI). Residues 89-109 (MQILAGSKLISIDLNDPDDRV) lie on the Cytoplasmic side of the membrane. Residues 110 to 131 (KFTEAQKGLAFIFILVESALFG) traverse the membrane as a helical segment. The Extracellular portion of the chain corresponds to 132–146 (YVLARTSTTINASIL). Residues 147–171 (FIAGIVIAQLIVATYLILLLDELIQ) form a helical membrane-spanning segment. The Cytoplasmic segment spans residues 172 to 178 (KGWGLGS). Residues 179–197 (GVSLFILAGVMKIMFWDMF) form a helical membrane-spanning segment. The Extracellular portion of the chain corresponds to 198 to 240 (GIASVSSQNLPIGFFPALFTALASHSDVLNLIVNTSTKNLFQP). A helical transmembrane segment spans residues 241–262 (DLVGLVTTIALIIITIYLTTMT). The Cytoplasmic segment spans residues 263 to 287 (IEIPVTSQKLRGIRRTIPLNFLYVS). A helical membrane pass occupies residues 288–309 (SIPVIFVAVLGSDIQLFASLAS). At 310-347 (YVSPSASNILNTVSGVFFFPPPNSAIPHSIYAVVLDPL) the chain is on the extracellular side. Residues 348–367 (GALEYAVVFIVLSILFGILW) form a helical membrane-spanning segment. Residues 368–410 (VDVAGLDPATQAQQLVEAGIEIPGVRNNPKIIEGILARYIYPL) are Cytoplasmic-facing. Residues 411–429 (AFFSSIIVGLIAVFATLLG) traverse the membrane as a helical segment. At 430–432 (AYG) the chain is on the extracellular side. The chain crosses the membrane as a helical span at residues 433 to 447 (TGIGILLAVTIAIQY). Over 448-469 (YSLLAYERSLEMYPLLKRLIGE) the chain is Cytoplasmic.

The protein belongs to the SecY/SEC61-alpha family. As to quaternary structure, component of the Sec protein translocase complex. Heterotrimer consisting of alpha (SecY), beta (SecG) and gamma (SecE) subunits. The heterotrimers can form oligomers, although 1 heterotrimer is thought to be able to translocate proteins. Interacts with the ribosome. May interact with SecDF, and other proteins may be involved.

Its subcellular location is the cell membrane. In terms of biological role, the central subunit of the protein translocation channel SecYEG. Consists of two halves formed by TMs 1-5 and 6-10. These two domains form a lateral gate at the front which open onto the bilayer between TMs 2 and 7, and are clamped together by SecE at the back. The channel is closed by both a pore ring composed of hydrophobic SecY resides and a short helix (helix 2A) on the extracellular side of the membrane which forms a plug. The plug probably moves laterally to allow the channel to open. The ring and the pore may move independently. This is Protein translocase subunit SecY from Saccharolobus solfataricus (strain ATCC 35092 / DSM 1617 / JCM 11322 / P2) (Sulfolobus solfataricus).